A 231-amino-acid chain; its full sequence is Ribonuclease HII (231 aa).

Residues 32–223 (WPVAGMDEAG…FRLGGTEVVE (192 aa)) enclose the RNase H type-2 domain. Residues Asp38, Glu39, and Asp130 each contribute to the a divalent metal cation site.

Belongs to the RNase HII family. The cofactor is Mn(2+). Mg(2+) is required as a cofactor.

It localises to the cytoplasm. It carries out the reaction Endonucleolytic cleavage to 5'-phosphomonoester.. In terms of biological role, endonuclease that specifically degrades the RNA of RNA-DNA hybrids. This Mesorhizobium japonicum (strain LMG 29417 / CECT 9101 / MAFF 303099) (Mesorhizobium loti (strain MAFF 303099)) protein is Ribonuclease HII.